The primary structure comprises 292 residues: Insulin-like growth factor-binding protein 3 (292 aa).

Residues 1–27 (MHPARPALWAAALTALTLLRGPPVARA) form the signal peptide. Residues 36-119 (PVVRCEPCDA…LNGRGFCANA (84 aa)) enclose the IGFBP N-terminal domain. 6 cysteine pairs are disulfide-bonded: Cys-40-Cys-69, Cys-43-Cys-71, Cys-51-Cys-72, Cys-60-Cys-75, Cys-83-Cys-96, and Cys-90-Cys-116. N-linked (GlcNAc...) asparagine glycans are attached at residues Asn-118, Asn-124, and Asn-137. Disordered regions lie at residues 127–161 (AYLPSQPSPGNTTESEEDHNAGSVESQVVPSTHRV) and 191–211 (YESQSTDTQNFSSESKRETEY). Positions 129 to 139 (LPSQPSPGNTT) are enriched in polar residues. Position 149 is a phosphoserine (Ser-149). Residues 192 to 203 (ESQSTDTQNFSS) are compositionally biased toward polar residues. The N-linked (GlcNAc...) asparagine glycan is linked to Asn-200. Ser-202 is subject to Phosphoserine. The 76-residue stretch at 211 to 286 (YGPCRREMED…DTKGKDDVHC (76 aa)) folds into the Thyroglobulin type-1 domain. Cystine bridges form between Cys-214–Cys-241, Cys-252–Cys-263, and Cys-265–Cys-286.

Interacts with XLKD1. Binds IGF2 more than IGF1. Forms a ternary complex of about 140 to 150 kDa with IGF1 or IGF2 and a 85 kDa glycoprotein (ALS). Interacts with humanin; humanin competes with importin KPNB1 for binding to IGFBP3, blocking IGFBP3 nuclear import and IGFBP3-mediated apoptosis. Interacts with TMEM219. Interacts with RXRA; this interaction modulates the transcriptional activity of RXRA. Interacts with LRP1; this interaction mediates cell growth inhibition independent of IGF1. In terms of processing, phosphorylated by FAM20C in the extracellular medium. Phosphorylated by CK2; resulting in decreased nuclear localization.

The protein localises to the secreted. The protein resides in the nucleus. Multifunctional protein that plays a critical role in regulating the availability of IGFs such as IGF1 and IGF2 to their receptors and thereby regulates IGF-mediated cellular processes including proliferation, differentiation, and apoptosis in a cell-type specific manner. Also exhibits IGF-independent antiproliferative and apoptotic effects mediated by its receptor TMEM219/IGFBP-3R. Inhibits the positive effect of humanin on insulin sensitivity. Promotes testicular germ cell apoptosis. Acts via LRP-1/alpha2M receptor, also known as TGF-beta type V receptor, to mediate cell growth inhibition independent of IGF1. Mechanistically, induces serine-specific dephosphorylation of IRS1 or IRS2 upon ligation to its receptor, leading to the inhibitory cascade. In the nucleus, interacts with transcription factors such as retinoid X receptor-alpha/RXRA to regulate transcriptional signaling and apoptosis. This Rattus norvegicus (Rat) protein is Insulin-like growth factor-binding protein 3 (Igfbp3).